We begin with the raw amino-acid sequence, 209 residues long: Uracil phosphoribosyltransferase (209 aa).

5-phospho-alpha-D-ribose 1-diphosphate-binding positions include Arg-79, Arg-104, and 131 to 139; that span reads DPMLATGGS. Residues Ile-194 and 199–201 each bind uracil; that span reads GDA. Asp-200 contacts 5-phospho-alpha-D-ribose 1-diphosphate.

The protein belongs to the UPRTase family. Mg(2+) is required as a cofactor.

It catalyses the reaction UMP + diphosphate = 5-phospho-alpha-D-ribose 1-diphosphate + uracil. It functions in the pathway pyrimidine metabolism; UMP biosynthesis via salvage pathway; UMP from uracil: step 1/1. Its activity is regulated as follows. Allosterically activated by GTP. Catalyzes the conversion of uracil and 5-phospho-alpha-D-ribose 1-diphosphate (PRPP) to UMP and diphosphate. This is Uracil phosphoribosyltransferase from Streptococcus pyogenes serotype M49 (strain NZ131).